Reading from the N-terminus, the 147-residue chain is Lysozyme C (147 aa).

Residues 1 to 18 form the signal peptide; it reads MKFFLILGFCLLPLIAQG. Residues 19-147 enclose the C-type lysozyme domain; it reads KVFQRCELAA…VSQWIRGCRV (129 aa). Cystine bridges form between C24/C145, C48/C133, C82/C98, and C94/C112. Residues E53 and D70 contribute to the active site. D119 provides a ligand contact to substrate.

The protein belongs to the glycosyl hydrolase 22 family. As to quaternary structure, monomer. As to expression, expressed in liver and ovary. Not expressed in bone marrow, lung, spleen, intestine or oviduct.

The protein resides in the secreted. It catalyses the reaction Hydrolysis of (1-&gt;4)-beta-linkages between N-acetylmuramic acid and N-acetyl-D-glucosamine residues in a peptidoglycan and between N-acetyl-D-glucosamine residues in chitodextrins.. Functionally, lysozymes have primarily a bacteriolytic function; those in tissues and body fluids are associated with the monocyte-macrophage system and enhance the activity of immunoagents. Has bacteriolytic activity against M.luteus. This Dromaius novaehollandiae (Emu) protein is Lysozyme C.